We begin with the raw amino-acid sequence, 362 residues long: DNA replication and repair protein RecF (362 aa).

30-37 (GLNAQGKS) lines the ATP pocket.

Belongs to the RecF family.

It is found in the cytoplasm. The RecF protein is involved in DNA metabolism; it is required for DNA replication and normal SOS inducibility. RecF binds preferentially to single-stranded, linear DNA. It also seems to bind ATP. The sequence is that of DNA replication and repair protein RecF from Thermoanaerobacter sp. (strain X514).